Consider the following 124-residue polypeptide: Small ribosomal subunit protein uS12c (124 aa).

Disordered stretches follow at residues 1–28 (MPTI…KSCP) and 104–124 (AAGV…KPKS). 2 stretches are compositionally biased toward basic residues: residues 11–20 (ERRKINKKTK) and 109–124 (DRRK…KPKS).

This sequence belongs to the universal ribosomal protein uS12 family. Part of the 30S ribosomal subunit.

The protein resides in the plastid. The protein localises to the chloroplast. In terms of biological role, with S4 and S5 plays an important role in translational accuracy. Located at the interface of the 30S and 50S subunits. In Porphyra purpurea (Red seaweed), this protein is Small ribosomal subunit protein uS12c (rps12).